We begin with the raw amino-acid sequence, 113 residues long: Large ribosomal subunit protein bL19 (113 aa).

Belongs to the bacterial ribosomal protein bL19 family.

In terms of biological role, this protein is located at the 30S-50S ribosomal subunit interface and may play a role in the structure and function of the aminoacyl-tRNA binding site. In Mycobacterium leprae (strain Br4923), this protein is Large ribosomal subunit protein bL19.